The following is a 143-amino-acid chain: Hemoglobin subunit alpha (143 aa).

Position 2 is an N-acetylserine (Ser2). Residues Ser2–Arg143 form the Globin domain. His60 provides a ligand contact to O2. His89 serves as a coordination point for heme b.

The protein belongs to the globin family. As to quaternary structure, heterotetramer of two alpha chains and two beta chains. Red blood cells.

In terms of biological role, involved in oxygen transport from gills to the various peripheral tissues. The protein is Hemoglobin subunit alpha (hba) of Cyprinus carpio (Common carp).